The following is a 302-amino-acid chain: FeMo cofactor biosynthesis protein NifB (302 aa).

The Radical SAM core domain maps to 22–264; that stretch reads HDKYGRVHLP…PQFRACGQCR (243 aa). Positions 36, 40, and 43 each coordinate [4Fe-4S] cluster. Residues G91, T142, and I194 each coordinate S-adenosyl-L-methionine. Residues C260 and C263 each coordinate [4Fe-4S] cluster.

Belongs to the radical SAM superfamily. NifB family. In terms of assembly, monomer. The cofactor is [4Fe-4S] cluster.

It functions in the pathway cofactor biosynthesis; Fe-Mo cofactor biosynthesis. In terms of biological role, involved in the biosynthesis of the iron-molybdenum cofactor (FeMo-co or M-cluster) found in the dinitrogenase enzyme of the nitrogenase complex in nitrogen-fixing microorganisms. NifB catalyzes the crucial step of radical SAM-dependent carbide insertion that occurs concomitant with the insertion of a 9th sulfur and the rearrangement/coupling of two [4Fe-4S] clusters into a [8Fe-9S-C] cluster, the precursor to the M-cluster. The polypeptide is FeMo cofactor biosynthesis protein NifB (Methanocaldococcus infernus (strain DSM 11812 / JCM 15783 / ME)).